The chain runs to 118 residues: Ribosome-binding factor A (118 aa).

It belongs to the RbfA family. As to quaternary structure, monomer. Binds 30S ribosomal subunits, but not 50S ribosomal subunits or 70S ribosomes.

Its subcellular location is the cytoplasm. In terms of biological role, one of several proteins that assist in the late maturation steps of the functional core of the 30S ribosomal subunit. Associates with free 30S ribosomal subunits (but not with 30S subunits that are part of 70S ribosomes or polysomes). Required for efficient processing of 16S rRNA. May interact with the 5'-terminal helix region of 16S rRNA. The sequence is that of Ribosome-binding factor A from Bacillus cereus (strain AH187).